Consider the following 255-residue polypeptide: Pyridoxine 5'-phosphate synthase (255 aa).

A 3-amino-2-oxopropyl phosphate-binding site is contributed by asparagine 6. 8-9 (DH) provides a ligand contact to 1-deoxy-D-xylulose 5-phosphate. Arginine 17 provides a ligand contact to 3-amino-2-oxopropyl phosphate. Residue histidine 41 is the Proton acceptor of the active site. 1-deoxy-D-xylulose 5-phosphate contacts are provided by arginine 43 and histidine 48. Residue glutamate 68 is the Proton acceptor of the active site. Threonine 96 contributes to the 1-deoxy-D-xylulose 5-phosphate binding site. Histidine 208 (proton donor) is an active-site residue. Residues glycine 209 and 230-231 (GQ) each bind 3-amino-2-oxopropyl phosphate.

It belongs to the PNP synthase family. As to quaternary structure, homooctamer; tetramer of dimers.

The protein resides in the cytoplasm. The catalysed reaction is 3-amino-2-oxopropyl phosphate + 1-deoxy-D-xylulose 5-phosphate = pyridoxine 5'-phosphate + phosphate + 2 H2O + H(+). It functions in the pathway cofactor biosynthesis; pyridoxine 5'-phosphate biosynthesis; pyridoxine 5'-phosphate from D-erythrose 4-phosphate: step 5/5. In terms of biological role, catalyzes the complicated ring closure reaction between the two acyclic compounds 1-deoxy-D-xylulose-5-phosphate (DXP) and 3-amino-2-oxopropyl phosphate (1-amino-acetone-3-phosphate or AAP) to form pyridoxine 5'-phosphate (PNP) and inorganic phosphate. The polypeptide is Pyridoxine 5'-phosphate synthase (Campylobacter lari (strain RM2100 / D67 / ATCC BAA-1060)).